A 328-amino-acid chain; its full sequence is Ribosomal RNA large subunit methyltransferase F (328 aa).

The tract at residues 1–31 (MTDTRKPPRKKPQRPAKPAAPREKATLHPRN) is disordered.

The protein belongs to the methyltransferase superfamily. METTL16/RlmF family.

The protein localises to the cytoplasm. It carries out the reaction adenosine(1618) in 23S rRNA + S-adenosyl-L-methionine = N(6)-methyladenosine(1618) in 23S rRNA + S-adenosyl-L-homocysteine + H(+). Specifically methylates the adenine in position 1618 of 23S rRNA. This chain is Ribosomal RNA large subunit methyltransferase F, found in Pseudomonas syringae pv. syringae (strain B728a).